Here is a 402-residue protein sequence, read N- to C-terminus: Calcium-responsive transactivator (402 aa).

The tract at residues 1–148 (MSVAFASARP…TLPTTSMSMS (148 aa)) is N-terminal auto-inhibitory domain; necessary for interaction with SMARCA4/BRG1. Positions 50–53 (YQQI) match the SH2-binding motif. 5 disordered regions span residues 72 to 129 (QSLL…GPNH), 141 to 170 (PTTS…SVPL), 195 to 250 (MHQQ…SSQQ), 262 to 290 (QYGH…YQPA), and 305 to 402 (TQHY…NYQQ). Over residues 92 to 106 (QSGSAQGLHSQGSLS) the composition is skewed to low complexity. Over residues 117–129 (SLMQAQIGNGPNH) the composition is skewed to polar residues. The segment at 149–237 (GSGHGSGPGY…GGGVMGQRPM (89 aa)) is methionine-rich intra-molecular domain. Over residues 196-224 (HQQAASSHYSAAQGGSQHYQGQSMAMMGQ) the composition is skewed to low complexity. The segment at 251–323 (YLGQEEYYGG…SQYSQQQTGY (73 aa)) is MFD domain. 2 stretches are compositionally biased toward low complexity: residues 311–379 (GGNS…RASQ) and 390–402 (YGYE…NYQQ). A necessary for nuclear localization region spans residues 340 to 402 (NQQSYPGQQQ…EQGQYGNYQQ (63 aa)). An SH2-binding motif is present at residues 359–362 (SQYS). The SH3-binding signature appears at 377–385 (ASQTGPSTQ). The tract at residues 393–402 (EQGQYGNYQQ) is necessary for interaction with CREBBP and for the recruitment of CREBBP to the nuclear bodies. The SH2-binding signature appears at 397 to 400 (YGNY).

Belongs to the SS18 family. In terms of assembly, homodimer. Dimerization may be necessary for its function in neuronal dendritic development. Interacts (via C-terminus) with CREBBP (via N-terminus), EP300 and SMARCA4/BRG1. Interacts with the nBAF complex. Association with CREBBP facilitates transcription while the association with SMARCA4/BRG1 suppresses CREST-mediated transcription in resting neurons.

It localises to the nucleus. Its subcellular location is the chromosome. It is found in the centromere. The protein localises to the kinetochore. Transcriptional activator which is required for calcium-dependent dendritic growth and branching in cortical neurons. Recruits CREB-binding protein (CREBBP) to nuclear bodies. Component of the CREST-BRG1 complex, a multiprotein complex that regulates promoter activation by orchestrating a calcium-dependent release of a repressor complex and a recruitment of an activator complex. In resting neurons, transcription of the c-FOS promoter is inhibited by BRG1-dependent recruitment of a phospho-RB1-HDAC1 repressor complex. Upon calcium influx, RB1 is dephosphorylated by calcineurin, which leads to release of the repressor complex. At the same time, there is increased recruitment of CREBBP to the promoter by a CREST-dependent mechanism, which leads to transcriptional activation. The CREST-BRG1 complex also binds to the NR2B promoter, and activity-dependent induction of NR2B expression involves a release of HDAC1 and recruitment of CREBBP. The protein is Calcium-responsive transactivator (SS18L1) of Bos taurus (Bovine).